We begin with the raw amino-acid sequence, 153 residues long: uncharacterized protein (153 aa).

Positions 1–19 (MRKYIPLVLFIFSWPVLCA) are cleaved as a signal peptide. Catalysis depends on residues Arg46, Glu54, and Arg88.

This sequence belongs to the thermonuclease family.

This is an uncharacterized protein from Escherichia coli.